The sequence spans 394 residues: Actin-related protein 2 (394 aa).

N-acetylmethionine is present on methionine 1. Residues 160–162 (GDG) and 214–218 (RMIKE) contribute to the ATP site. Lysine 299 bears the N6-acetyllysine mark. ATP is bound at residue 305-310 (GGSTMY). Lysine 322 carries the post-translational modification N6-acetyllysine.

This sequence belongs to the actin family. ARP2 subfamily. Component of the Arp2/3 complex composed of ACTR2/ARP2, ACTR3/ARP3, ARPC1B/p41-ARC, ARPC2/p34-ARC, ARPC3/p21-ARC, ARPC4/p20-ARC and ARPC5/p16-ARC.

The protein resides in the cytoplasm. It localises to the cytoskeleton. It is found in the cell projection. The protein localises to the nucleus. Functionally, ATP-binding component of the Arp2/3 complex, a multiprotein complex that mediates actin polymerization upon stimulation by nucleation-promoting factor (NPF). The Arp2/3 complex mediates the formation of branched actin networks in the cytoplasm, providing the force for cell motility. Seems to contact the pointed end of the daughter actin filament. In addition to its role in the cytoplasmic cytoskeleton, the Arp2/3 complex also promotes actin polymerization in the nucleus, thereby regulating gene transcription and repair of damaged DNA. The Arp2/3 complex promotes homologous recombination (HR) repair in response to DNA damage by promoting nuclear actin polymerization, leading to drive motility of double-strand breaks (DSBs). The protein is Actin-related protein 2 (Actr2) of Rattus norvegicus (Rat).